The sequence spans 157 residues: 2-C-methyl-D-erythritol 2,4-cyclodiphosphate synthase (157 aa).

Positions 8 and 10 each coordinate a divalent metal cation. 4-CDP-2-C-methyl-D-erythritol 2-phosphate is bound by residues 8–10 (DVH) and 34–35 (HS). His42 provides a ligand contact to a divalent metal cation. Residues 56 to 58 (DIG), 132 to 135 (TTNE), and Arg142 each bind 4-CDP-2-C-methyl-D-erythritol 2-phosphate.

Belongs to the IspF family. Homotrimer. A divalent metal cation is required as a cofactor.

It catalyses the reaction 4-CDP-2-C-methyl-D-erythritol 2-phosphate = 2-C-methyl-D-erythritol 2,4-cyclic diphosphate + CMP. The protein operates within isoprenoid biosynthesis; isopentenyl diphosphate biosynthesis via DXP pathway; isopentenyl diphosphate from 1-deoxy-D-xylulose 5-phosphate: step 4/6. Functionally, involved in the biosynthesis of isopentenyl diphosphate (IPP) and dimethylallyl diphosphate (DMAPP), two major building blocks of isoprenoid compounds. Catalyzes the conversion of 4-diphosphocytidyl-2-C-methyl-D-erythritol 2-phosphate (CDP-ME2P) to 2-C-methyl-D-erythritol 2,4-cyclodiphosphate (ME-CPP) with a corresponding release of cytidine 5-monophosphate (CMP). The sequence is that of 2-C-methyl-D-erythritol 2,4-cyclodiphosphate synthase from Chlorobaculum tepidum (strain ATCC 49652 / DSM 12025 / NBRC 103806 / TLS) (Chlorobium tepidum).